Reading from the N-terminus, the 341-residue chain is NADH-ubiquinone oxidoreductase chain 2 (341 aa).

Helical transmembrane passes span 8-28 (IFFI…SWLG), 61-81 (FLTQ…MMMF), 95-117 (LLIL…FPGV), 145-165 (LNIN…ALGG), 195-215 (LLWL…ILMF), 238-258 (FFMF…GFLP), 266-286 (LVEM…LITL), and 320-340 (ILTM…IYLI).

This sequence belongs to the complex I subunit 2 family.

It is found in the mitochondrion inner membrane. It catalyses the reaction a ubiquinone + NADH + 5 H(+)(in) = a ubiquinol + NAD(+) + 4 H(+)(out). Core subunit of the mitochondrial membrane respiratory chain NADH dehydrogenase (Complex I) that is believed to belong to the minimal assembly required for catalysis. Complex I functions in the transfer of electrons from NADH to the respiratory chain. The immediate electron acceptor for the enzyme is believed to be ubiquinone. In Aedes aegypti (Yellowfever mosquito), this protein is NADH-ubiquinone oxidoreductase chain 2.